The chain runs to 502 residues: Probable cytochrome P450 6a23 (502 aa).

Residue C445 coordinates heme.

This sequence belongs to the cytochrome P450 family. It depends on heme as a cofactor.

The protein resides in the endoplasmic reticulum membrane. Its subcellular location is the microsome membrane. May be involved in the metabolism of insect hormones and in the breakdown of synthetic insecticides. This Drosophila melanogaster (Fruit fly) protein is Probable cytochrome P450 6a23 (Cyp6a23).